Here is a 423-residue protein sequence, read N- to C-terminus: Acetylornithine aminotransferase, mitochondrial (423 aa).

K276 carries the post-translational modification N6-(pyridoxal phosphate)lysine.

It belongs to the class-III pyridoxal-phosphate-dependent aminotransferase family. Pyridoxal 5'-phosphate is required as a cofactor.

It is found in the mitochondrion matrix. It carries out the reaction N(2)-acetyl-L-ornithine + 2-oxoglutarate = N-acetyl-L-glutamate 5-semialdehyde + L-glutamate. It participates in amino-acid biosynthesis; L-arginine biosynthesis; N(2)-acetyl-L-ornithine from L-glutamate: step 4/4. The chain is Acetylornithine aminotransferase, mitochondrial (ARG8) from Eremothecium gossypii (strain ATCC 10895 / CBS 109.51 / FGSC 9923 / NRRL Y-1056) (Yeast).